Consider the following 173-residue polypeptide: Shikimate kinase (173 aa).

11 to 16 provides a ligand contact to ATP; the sequence is GAGKTT. T15 lines the Mg(2+) pocket. Substrate contacts are provided by D33, R57, and G79. R118 contacts ATP. R140 serves as a coordination point for substrate.

It belongs to the shikimate kinase family. As to quaternary structure, monomer. Mg(2+) serves as cofactor.

The protein resides in the cytoplasm. The enzyme catalyses shikimate + ATP = 3-phosphoshikimate + ADP + H(+). It participates in metabolic intermediate biosynthesis; chorismate biosynthesis; chorismate from D-erythrose 4-phosphate and phosphoenolpyruvate: step 5/7. In terms of biological role, catalyzes the specific phosphorylation of the 3-hydroxyl group of shikimic acid using ATP as a cosubstrate. In Parabacteroides distasonis (strain ATCC 8503 / DSM 20701 / CIP 104284 / JCM 5825 / NCTC 11152), this protein is Shikimate kinase.